A 188-amino-acid polypeptide reads, in one-letter code: Chitin synthase 2 (188 aa).

This sequence belongs to the chitin synthase family.

Its subcellular location is the cell membrane. The enzyme catalyses [(1-&gt;4)-N-acetyl-beta-D-glucosaminyl](n) + UDP-N-acetyl-alpha-D-glucosamine = [(1-&gt;4)-N-acetyl-beta-D-glucosaminyl](n+1) + UDP + H(+). Functionally, polymerizes chitin, a structural polymer of the cell wall and septum, by transferring the sugar moiety of UDP-GlcNAc to the non-reducing end of the growing chitin polymer. The polypeptide is Chitin synthase 2 (CHS2) (Exophiala jeanselmei (Dematiaceous fungus)).